The chain runs to 538 residues: Poly [ADP-ribose] polymerase 2 (538 aa).

One can recognise a WGR domain in the interval 1–94 (MSIINDENGR…RDDEPVPNKY (94 aa)). The segment at 104-133 (RQTEKEVKKEEPEPEPKVDEKNTRGRKKRG) is disordered. Residues 105 to 126 (QTEKEVKKEEPEPEPKVDEKNT) are compositionally biased toward basic and acidic residues. One can recognise a PARP alpha-helical domain in the interval 148 to 285 (VEEVNEKLKE…GSIEASLELK (138 aa)). Positions 309–535 (EPVSEEIAGK…VKVDRLTAKE (227 aa)) constitute a PARP catalytic domain. Residues 357–381 (QEVPKKRGRKSTKTAAPTVPPPTTK) form a disordered region.

This sequence belongs to the ARTD/PARP family.

The protein resides in the nucleus. It carries out the reaction NAD(+) + (ADP-D-ribosyl)n-acceptor = nicotinamide + (ADP-D-ribosyl)n+1-acceptor + H(+).. The catalysed reaction is L-aspartyl-[protein] + NAD(+) = 4-O-(ADP-D-ribosyl)-L-aspartyl-[protein] + nicotinamide. It catalyses the reaction L-glutamyl-[protein] + NAD(+) = 5-O-(ADP-D-ribosyl)-L-glutamyl-[protein] + nicotinamide. Inhibited by N-(6-oxo-5,6-dihydrophenanthridin-2-yl)-N,N-dimethylacetamide HCl (PJ34), 1,5-dihydroxyisoquinoline (DHQ) and 3-aminobenzamide (3AB). Its function is as follows. Poly[ADP-ribose] polymerase modifies various nuclear proteins by poly(ADP-ribosyl)ation, a post-translational modification synthesized after DNA damage that appears as an obligatory step in a detection/signaling pathway leading to the reparation of DNA strand breaks and programmed cell death. This chain is Poly [ADP-ribose] polymerase 2, found in Caenorhabditis elegans.